The following is a 399-amino-acid chain: DNA replication and repair protein RecF (399 aa).

30 to 37 (GSNGIGKT) lines the ATP pocket.

It belongs to the RecF family.

It localises to the cytoplasm. Functionally, the RecF protein is involved in DNA metabolism; it is required for DNA replication and normal SOS inducibility. RecF binds preferentially to single-stranded, linear DNA. It also seems to bind ATP. The polypeptide is DNA replication and repair protein RecF (Paenarthrobacter aurescens (strain TC1)).